A 118-amino-acid polypeptide reads, in one-letter code: Ribonuclease P protein component (118 aa).

Belongs to the RnpA family. Consists of a catalytic RNA component (M1 or rnpB) and a protein subunit.

The enzyme catalyses Endonucleolytic cleavage of RNA, removing 5'-extranucleotides from tRNA precursor.. RNaseP catalyzes the removal of the 5'-leader sequence from pre-tRNA to produce the mature 5'-terminus. It can also cleave other RNA substrates such as 4.5S RNA. The protein component plays an auxiliary but essential role in vivo by binding to the 5'-leader sequence and broadening the substrate specificity of the ribozyme. This Vibrio campbellii (strain ATCC BAA-1116) protein is Ribonuclease P protein component.